The following is a 385-amino-acid chain: Sesquiterpene alcohol synthase (385 aa).

Mg(2+)-binding residues include Asp-123 and Asp-127. The DDXXD motif signature appears at 123 to 127; that stretch reads DDISD.

The protein belongs to the terpene synthase family. It depends on Mg(2+) as a cofactor. As to expression, specifically expressed in tissues lining the cuticle of the abdominal sternites of mature males.

The catalysed reaction is (2E,6E)-farnesyl diphosphate + H2O = (1S,6S,7R)-sesquipiperitol + diphosphate. It functions in the pathway pheromone biosynthesis. Its function is as follows. Sesquiterpene alcohol synthase that catalyzes the formation of (1S,6S,7R)-sesquipiperitol, a terpene intermediate in murgantiol biosynthesis, a male-released aggregation pheromone. This is Sesquiterpene alcohol synthase from Murgantia histrionica (Harlequin bug).